Consider the following 217-residue polypeptide: Small ribosomal subunit protein uS3 (217 aa).

The KH type-2 domain occupies 29–97; the sequence is ADYLHEDLAI…AQLNKLTGKQ (69 aa).

Belongs to the universal ribosomal protein uS3 family. Part of the 30S ribosomal subunit. Forms a tight complex with proteins S10 and S14.

Binds the lower part of the 30S subunit head. Binds mRNA in the 70S ribosome, positioning it for translation. The protein is Small ribosomal subunit protein uS3 of Streptococcus mutans serotype c (strain ATCC 700610 / UA159).